We begin with the raw amino-acid sequence, 95 residues long: Aspartyl/glutamyl-tRNA(Asn/Gln) amidotransferase subunit C (95 aa).

The protein belongs to the GatC family. In terms of assembly, heterotrimer of A, B and C subunits.

The enzyme catalyses L-glutamyl-tRNA(Gln) + L-glutamine + ATP + H2O = L-glutaminyl-tRNA(Gln) + L-glutamate + ADP + phosphate + H(+). The catalysed reaction is L-aspartyl-tRNA(Asn) + L-glutamine + ATP + H2O = L-asparaginyl-tRNA(Asn) + L-glutamate + ADP + phosphate + 2 H(+). Allows the formation of correctly charged Asn-tRNA(Asn) or Gln-tRNA(Gln) through the transamidation of misacylated Asp-tRNA(Asn) or Glu-tRNA(Gln) in organisms which lack either or both of asparaginyl-tRNA or glutaminyl-tRNA synthetases. The reaction takes place in the presence of glutamine and ATP through an activated phospho-Asp-tRNA(Asn) or phospho-Glu-tRNA(Gln). The protein is Aspartyl/glutamyl-tRNA(Asn/Gln) amidotransferase subunit C of Methylococcus capsulatus (strain ATCC 33009 / NCIMB 11132 / Bath).